Consider the following 211-residue polypeptide: LexA repressor (211 aa).

The segment at residues 31 to 51 is a DNA-binding region (H-T-H motif); sequence RAEISKELGFRSPNAAEEHLK. Active-site for autocatalytic cleavage activity residues include Ser127 and Lys164.

The protein belongs to the peptidase S24 family. Homodimer.

The catalysed reaction is Hydrolysis of Ala-|-Gly bond in repressor LexA.. In terms of biological role, represses a number of genes involved in the response to DNA damage (SOS response), including recA and lexA. In the presence of single-stranded DNA, RecA interacts with LexA causing an autocatalytic cleavage which disrupts the DNA-binding part of LexA, leading to derepression of the SOS regulon and eventually DNA repair. This Pasteurella multocida (strain Pm70) protein is LexA repressor.